The chain runs to 158 residues: Transcription elongation factor GreA (158 aa).

Belongs to the GreA/GreB family.

In terms of biological role, necessary for efficient RNA polymerase transcription elongation past template-encoded arresting sites. The arresting sites in DNA have the property of trapping a certain fraction of elongating RNA polymerases that pass through, resulting in locked ternary complexes. Cleavage of the nascent transcript by cleavage factors such as GreA or GreB allows the resumption of elongation from the new 3'terminus. GreA releases sequences of 2 to 3 nucleotides. This Rhizobium etli (strain CIAT 652) protein is Transcription elongation factor GreA.